Reading from the N-terminus, the 506-residue chain is Apolipoprotein N-acyltransferase (506 aa).

The next 6 helical transmembrane spans lie at 26-46 (FAPY…LILI), 66-86 (FASG…MPLA), 89-109 (LFLM…FTWS), 113-133 (FFAK…WLIA), 166-186 (GVEL…YAVI), and 192-212 (MLLI…WDWV). Residues 225 to 471 (IQGNVDQNLK…TAVLRAELTP (247 aa)) form the CN hydrolase domain. Glutamate 264 serves as the catalytic Proton acceptor. Residue lysine 330 is part of the active site. Cysteine 382 (nucleophile) is an active-site residue. Residues 479–499 (HQLGSWPLYIWVALSLALAWW) traverse the membrane as a helical segment.

The protein belongs to the CN hydrolase family. Apolipoprotein N-acyltransferase subfamily.

It localises to the cell inner membrane. It carries out the reaction N-terminal S-1,2-diacyl-sn-glyceryl-L-cysteinyl-[lipoprotein] + a glycerophospholipid = N-acyl-S-1,2-diacyl-sn-glyceryl-L-cysteinyl-[lipoprotein] + a 2-acyl-sn-glycero-3-phospholipid + H(+). It functions in the pathway protein modification; lipoprotein biosynthesis (N-acyl transfer). In terms of biological role, catalyzes the phospholipid dependent N-acylation of the N-terminal cysteine of apolipoprotein, the last step in lipoprotein maturation. The chain is Apolipoprotein N-acyltransferase from Vibrio vulnificus (strain CMCP6).